The chain runs to 242 residues: ATP synthase subunit a (242 aa).

The next 6 membrane-spanning stretches (helical) occupy residues 31 to 51, 84 to 104, 114 to 134, 140 to 160, 189 to 209, and 210 to 230; these read IYML…FYNW, FIPL…LGMT, IIVT…VGFV, FLTL…MIVI, VIAS…IPLM, and VILI…FTIL.

It belongs to the ATPase A chain family. F-type ATPases have 2 components, CF(1) - the catalytic core - and CF(0) - the membrane proton channel. CF(1) has five subunits: alpha(3), beta(3), gamma(1), delta(1), epsilon(1). CF(0) has three main subunits: a(1), b(2) and c(9-12). The alpha and beta chains form an alternating ring which encloses part of the gamma chain. CF(1) is attached to CF(0) by a central stalk formed by the gamma and epsilon chains, while a peripheral stalk is formed by the delta and b chains.

Its subcellular location is the cell inner membrane. Functionally, key component of the proton channel; it plays a direct role in the translocation of protons across the membrane. This is ATP synthase subunit a from Rickettsia canadensis (strain McKiel).